Here is a 103-residue protein sequence, read N- to C-terminus: Glutaredoxin-C1 (103 aa).

In terms of domain architecture, Glutaredoxin spans 1–102 (MDRVNRLAAQ…PLLRNAGALW (102 aa)). A disulfide bridge links cysteine 21 with cysteine 24.

The protein belongs to the glutaredoxin family. CC-type subfamily.

The protein resides in the cytoplasm. Has a glutathione-disulfide oxidoreductase activity in the presence of NADPH and glutathione reductase. Reduces low molecular weight disulfides and proteins. The polypeptide is Glutaredoxin-C1 (GRXC1) (Oryza sativa subsp. japonica (Rice)).